The chain runs to 1857 residues: U3 small nucleolar RNA-associated protein 10 (1857 aa).

Residues 267 to 287 traverse the membrane as a helical segment; it reads LTAYSIISVLSSLVPLSADLV. The stretch at 1817–1855 is one HEAT repeat; it reads LIPYIAELLEDDDEEVELEVRNGLVRVIENVLGEPLDRY.

This sequence belongs to the HEATR1/UTP10 family. As to quaternary structure, component of the ribosomal small subunit (SSU) processome.

Its subcellular location is the nucleus. The protein localises to the nucleolus. It is found in the membrane. Involved in nucleolar processing of pre-18S ribosomal RNA. Involved in ribosome biosynthesis. The chain is U3 small nucleolar RNA-associated protein 10 from Debaryomyces hansenii (strain ATCC 36239 / CBS 767 / BCRC 21394 / JCM 1990 / NBRC 0083 / IGC 2968) (Yeast).